The following is a 317-amino-acid chain: Adenine deaminase (317 aa).

The Zn(2+) site is built by H14, H16, and H194. E197 acts as the Proton donor in catalysis. D275 contacts Zn(2+). D276 is a binding site for substrate.

Belongs to the metallo-dependent hydrolases superfamily. Adenosine and AMP deaminases family. Adenine deaminase type 2 subfamily. Requires Zn(2+) as cofactor.

It catalyses the reaction adenine + H2O + H(+) = hypoxanthine + NH4(+). Catalyzes the hydrolytic deamination of adenine to hypoxanthine. Plays an important role in the purine salvage pathway and in nitrogen catabolism. The sequence is that of Adenine deaminase from Bordetella bronchiseptica (strain ATCC BAA-588 / NCTC 13252 / RB50) (Alcaligenes bronchisepticus).